The following is a 420-amino-acid chain: Histidine--tRNA ligase (420 aa).

It belongs to the class-II aminoacyl-tRNA synthetase family. Homodimer.

The protein localises to the cytoplasm. The catalysed reaction is tRNA(His) + L-histidine + ATP = L-histidyl-tRNA(His) + AMP + diphosphate + H(+). The protein is Histidine--tRNA ligase of Acholeplasma laidlawii (strain PG-8A).